Reading from the N-terminus, the 228-residue chain is Cytidylate kinase (228 aa).

Residue Gly17–Thr25 coordinates ATP.

It belongs to the cytidylate kinase family. Type 1 subfamily.

The protein resides in the cytoplasm. The enzyme catalyses CMP + ATP = CDP + ADP. It carries out the reaction dCMP + ATP = dCDP + ADP. This chain is Cytidylate kinase, found in Burkholderia multivorans (strain ATCC 17616 / 249).